We begin with the raw amino-acid sequence, 207 residues long: Cytochrome c biogenesis ATP-binding export protein CcmA (207 aa).

Residues 4–207 enclose the ABC transporter domain; that stretch reads LEARELLCER…RISLTQTGAA (204 aa). Position 36–43 (36–43) interacts with ATP; that stretch reads GSNGAGKT.

The protein belongs to the ABC transporter superfamily. CcmA exporter (TC 3.A.1.107) family. The complex is composed of two ATP-binding proteins (CcmA) and two transmembrane proteins (CcmB).

It is found in the cell inner membrane. It catalyses the reaction heme b(in) + ATP + H2O = heme b(out) + ADP + phosphate + H(+). Part of the ABC transporter complex CcmAB involved in the biogenesis of c-type cytochromes; once thought to export heme, this seems not to be the case, but its exact role is uncertain. Responsible for energy coupling to the transport system. The protein is Cytochrome c biogenesis ATP-binding export protein CcmA of Escherichia coli (strain UTI89 / UPEC).